Reading from the N-terminus, the 438-residue chain is Trigger factor (438 aa).

Positions 162–247 (GDRVNINYQG…LNKVEAPKLP (86 aa)) constitute a PPIase FKBP-type domain.

It belongs to the FKBP-type PPIase family. Tig subfamily.

The protein resides in the cytoplasm. It catalyses the reaction [protein]-peptidylproline (omega=180) = [protein]-peptidylproline (omega=0). Involved in protein export. Acts as a chaperone by maintaining the newly synthesized protein in an open conformation. Functions as a peptidyl-prolyl cis-trans isomerase. The chain is Trigger factor from Nitrosomonas eutropha (strain DSM 101675 / C91 / Nm57).